We begin with the raw amino-acid sequence, 958 residues long: Glycine dehydrogenase (decarboxylating) 2 (958 aa).

Residue Lys-707 is modified to N6-(pyridoxal phosphate)lysine.

The protein belongs to the GcvP family. In terms of assembly, the glycine cleavage system is composed of four proteins: P, T, L and H. Requires pyridoxal 5'-phosphate as cofactor.

The catalysed reaction is N(6)-[(R)-lipoyl]-L-lysyl-[glycine-cleavage complex H protein] + glycine + H(+) = N(6)-[(R)-S(8)-aminomethyldihydrolipoyl]-L-lysyl-[glycine-cleavage complex H protein] + CO2. The glycine cleavage system catalyzes the degradation of glycine. The P protein binds the alpha-amino group of glycine through its pyridoxal phosphate cofactor; CO(2) is released and the remaining methylamine moiety is then transferred to the lipoamide cofactor of the H protein. The protein is Glycine dehydrogenase (decarboxylating) 2 (gcvP2) of Pseudomonas aeruginosa (strain ATCC 15692 / DSM 22644 / CIP 104116 / JCM 14847 / LMG 12228 / 1C / PRS 101 / PAO1).